Consider the following 459-residue polypeptide: Trigger factor (459 aa).

A PPIase FKBP-type domain is found at 161–246 (GDKVVIDFQG…IKKIMEGKLP (86 aa)).

Belongs to the FKBP-type PPIase family. Tig subfamily.

The protein resides in the cytoplasm. The enzyme catalyses [protein]-peptidylproline (omega=180) = [protein]-peptidylproline (omega=0). In terms of biological role, involved in protein export. Acts as a chaperone by maintaining the newly synthesized protein in an open conformation. Functions as a peptidyl-prolyl cis-trans isomerase. In Legionella pneumophila (strain Corby), this protein is Trigger factor.